Here is a 335-residue protein sequence, read N- to C-terminus: 2-acylglycerol O-acyltransferase 2 (335 aa).

2 helical membrane-spanning segments follow: residues 24-44 (WAVS…LLLF) and 104-124 (YIMG…NFCT). N206 carries an N-linked (GlcNAc...) asparagine glycan.

It belongs to the diacylglycerol acyltransferase family.

It localises to the endoplasmic reticulum membrane. The protein localises to the cytoplasm. It is found in the perinuclear region. The catalysed reaction is a 2-acylglycerol + an acyl-CoA = a 1,2-diacylglycerol + CoA. It carries out the reaction a 2-acylglycerol + an acyl-CoA = a 1,2-diacyl-sn-glycerol + CoA. The enzyme catalyses a 2-acylglycerol + an acyl-CoA = a 2,3-diacyl-sn-glycerol + CoA. It catalyses the reaction a 1-acylglycerol + an acyl-CoA = a 1,2-diacylglycerol + CoA. The catalysed reaction is a 1-acylglycerol + an acyl-CoA = a 1,3-diacylglycerol + CoA. It carries out the reaction 1-O-alkylglycerol + an acyl-CoA = 1-O-alkyl-3-acylglycerol + CoA. The enzyme catalyses an acyl-CoA + a 1,2-diacyl-sn-glycerol = a triacyl-sn-glycerol + CoA. It participates in glycerolipid metabolism; triacylglycerol biosynthesis. Functionally, involved in glycerolipid synthesis and lipid metabolism. Catalyzes the formation of diacylglycerol, the precursor of triacylglycerol, by transferring the acyl chain of a fatty acyl-CoA to a monoacylglycerol. Plays a central role in absorption of dietary fat in the small intestine by catalyzing the resynthesis of triacylglycerol in enterocytes. Has a preference toward monoacylglycerols containing unsaturated fatty acids in an order of C18:3 &gt; C18:2 &gt; C18:1 &gt; C18:0 at sn-2. Able to use 1-monoalkylglycerol (1-MAkG, 1-O-alkylglycerol) as an acyl acceptor for the synthesis of monoalkyl-monoacylglycerol (MAMAG, 1-O-alkyl-3-acylglycerol or 1-O-alkyl-2-acylglycerol) and subsequently, with lower efficiency, may add another acyl chain producing monoalkyl-diacylglycerol (MADAG, 1-O-alkyl-2,3-diacylglycerol). Possesses weak but significant activity with diacylglycerol as substrate, producing triacylglycerol (triacyl-sn-glycerol). This is 2-acylglycerol O-acyltransferase 2 (mogat2) from Xenopus tropicalis (Western clawed frog).